Here is a 243-residue protein sequence, read N- to C-terminus: Transcription factor A, mitochondrial (243 aa).

The transit peptide at 1-42 (MALFRGMWSVLKALGRTGVEMCAGCGGRIPSSISLVCIPKCF) directs the protein to the mitochondrion. The segment at residues 49 to 117 (PKKPMSSYLR…AYKEAVSKYK (69 aa)) is a DNA-binding region (HMG box 1). Ser-54, Ser-55, and Ser-60 each carry phosphoserine; by PKA. Lys-66 carries the post-translational modification N6-succinyllysine. Thr-121 is subject to Phosphothreonine. Residues 154-218 (PKRPRSAYNI…RYDNEMKSWE (65 aa)) constitute a DNA-binding region (HMG box 2). The residue at position 159 (Ser-159) is a Phosphoserine; by PKA. Residue Ser-192 is modified to Phosphoserine.

In terms of assembly, monomer; binds DNA as a monomer. Homodimer. Component of the mitochondrial transcription initiation complex, composed at least of TFB2M, TFAM and POLRMT. In this complex TFAM recruits POLRMT to the promoter whereas TFB2M induces structural changes in POLRMT to enable promoter opening and trapping of the DNA non-template strand. Upon metabolic stress, forms a complex composed of FOXO3, SIRT3, TFAM and POLRMT. Interacts with TFB1M and TFB2M. Interacts with CLPX; this enhances DNA-binding. In terms of processing, phosphorylation by PKA within the HMG box 1 impairs DNA binding and promotes degradation by the AAA+ Lon protease. The mitochondrial isoform is widely expressed while the nuclear isoform is testis-specific.

It is found in the mitochondrion. It localises to the mitochondrion matrix. The protein localises to the mitochondrion nucleoid. Its subcellular location is the nucleus. Functionally, binds to the mitochondrial light strand promoter and functions in mitochondrial transcription regulation. Component of the mitochondrial transcription initiation complex, composed at least of TFB2M, TFAM and POLRMT that is required for basal transcription of mitochondrial DNA. In this complex, TFAM recruits POLRMT to a specific promoter whereas TFB2M induces structural changes in POLRMT to enable promoter opening and trapping of the DNA non-template strand. Required for accurate and efficient promoter recognition by the mitochondrial RNA polymerase. Promotes transcription initiation from the HSP1 and the light strand promoter by binding immediately upstream of transcriptional start sites. Is able to unwind DNA. Bends the mitochondrial light strand promoter DNA into a U-turn shape via its HMG boxes. Required for maintenance of normal levels of mitochondrial DNA. May play a role in organizing and compacting mitochondrial DNA. Its function is as follows. May also function as a transcriptional activator or may have a structural role in the compaction of nuclear DNA during spermatogenesis. This Mus musculus (Mouse) protein is Transcription factor A, mitochondrial.